The sequence spans 344 residues: Phenylalanine--tRNA ligase alpha subunit (344 aa).

Glutamate 256 is a binding site for Mg(2+).

It belongs to the class-II aminoacyl-tRNA synthetase family. Phe-tRNA synthetase alpha subunit type 1 subfamily. Tetramer of two alpha and two beta subunits. It depends on Mg(2+) as a cofactor.

It localises to the cytoplasm. The catalysed reaction is tRNA(Phe) + L-phenylalanine + ATP = L-phenylalanyl-tRNA(Phe) + AMP + diphosphate + H(+). This Bacillus cytotoxicus (strain DSM 22905 / CIP 110041 / 391-98 / NVH 391-98) protein is Phenylalanine--tRNA ligase alpha subunit.